Reading from the N-terminus, the 466-residue chain is Asparagine--tRNA ligase (466 aa).

This sequence belongs to the class-II aminoacyl-tRNA synthetase family. Homodimer.

The protein localises to the cytoplasm. It catalyses the reaction tRNA(Asn) + L-asparagine + ATP = L-asparaginyl-tRNA(Asn) + AMP + diphosphate + H(+). This chain is Asparagine--tRNA ligase, found in Sodalis glossinidius (strain morsitans).